The chain runs to 305 residues: tRNA dimethylallyltransferase (305 aa).

9–16 provides a ligand contact to ATP; it reads GPTASGKS. 11–16 is a binding site for substrate; the sequence is TASGKS. The segment at 34–37 is interaction with substrate tRNA; sequence DSKQ.

This sequence belongs to the IPP transferase family. Monomer. Mg(2+) serves as cofactor.

It carries out the reaction adenosine(37) in tRNA + dimethylallyl diphosphate = N(6)-dimethylallyladenosine(37) in tRNA + diphosphate. Functionally, catalyzes the transfer of a dimethylallyl group onto the adenine at position 37 in tRNAs that read codons beginning with uridine, leading to the formation of N6-(dimethylallyl)adenosine (i(6)A). The protein is tRNA dimethylallyltransferase of Anaplasma marginale (strain Florida).